Here is a 367-residue protein sequence, read N- to C-terminus: Palmitoyltransferase ERF2 (367 aa).

Positions 1–23 (MRLHSRQASNPHRQYSAAQSLHS) are enriched in polar residues. Positions 1–32 (MRLHSRQASNPHRQYSAAQSLHSSSDDSEHKE) are disordered. Topologically, residues 1-87 (MRLHSRQASN…GRLRTVAKTK (87 aa)) are cytoplasmic. A helical membrane pass occupies residues 88–108 (YLSVLVLVMLIAPIVLFSVFE). The Lumenal portion of the chain corresponds to 109 to 121 (TGYLWKHVAGAKP). Residues 122–142 (CVVLCYYFWTLCFASFISTGA) form a helical membrane-spanning segment. The Cytoplasmic segment spans residues 143-229 (TDPGTLPRNI…NCIGQRNHRY (87 aa)). One can recognise a DHHC domain in the interval 185–235 (KYCTTCRIWRPPRASHCAVCDSCILSFDHHCDWLNNCIGQRNHRYFLAFLF). C215 functions as the S-palmitoyl cysteine intermediate in the catalytic mechanism. The helical transmembrane segment at 230–250 (FLAFLFSSVLSSIWLLTCCAL) threads the bilayer. At 251-262 (KLRHAGSPSAAP) the chain is on the lumenal side. The helical transmembrane segment at 263–283 (VSLLLICYCAVSIWYPLLLAI) threads the bilayer. The Cytoplasmic portion of the chain corresponds to 284–367 (YHLFLTGTQQ…LPIPHSFEKV (84 aa)).

This sequence belongs to the DHHC palmitoyltransferase family. ERF2/ZDHHC9 subfamily. In terms of assembly, interacts with ERF4. Autopalmitoylated.

It localises to the endoplasmic reticulum membrane. It catalyses the reaction L-cysteinyl-[protein] + hexadecanoyl-CoA = S-hexadecanoyl-L-cysteinyl-[protein] + CoA. Functionally, the ERF2-ERF4 complex is a palmitoyltransferase specific for Ras proteins. This chain is Palmitoyltransferase ERF2 (ERF2), found in Eremothecium gossypii (strain ATCC 10895 / CBS 109.51 / FGSC 9923 / NRRL Y-1056) (Yeast).